Reading from the N-terminus, the 109-residue chain is uncharacterized protein (109 aa).

Residues 36–109 form a disordered region; that stretch reads NSSNNLNNNN…KKKKKKRRVK (74 aa). A compositionally biased stretch (low complexity) spans 39 to 88; that stretch reads NNLNNNNFNENNLKNNNNRNGNNNNNNNNNNNNNNNNNNNNNNNNNNNNN. Residues 99–109 are compositionally biased toward basic residues; sequence QKKKKKKRRVK.

This is an uncharacterized protein from Dictyostelium discoideum (Social amoeba).